A 119-amino-acid polypeptide reads, in one-letter code: NADH-quinone oxidoreductase subunit A (119 aa).

A run of 3 helical transmembrane segments spans residues 7-27 (FPVLLFIIIGVGLGLALMTIG), 63-83 (LIAILFILFDLETAFLFPWGV), and 88-108 (IGWPGFFAMGVFLLEFLVGFV).

It belongs to the complex I subunit 3 family. NDH-1 is composed of 14 different subunits. Subunits NuoA, H, J, K, L, M, N constitute the membrane sector of the complex.

Its subcellular location is the cell inner membrane. The catalysed reaction is a quinone + NADH + 5 H(+)(in) = a quinol + NAD(+) + 4 H(+)(out). NDH-1 shuttles electrons from NADH, via FMN and iron-sulfur (Fe-S) centers, to quinones in the respiratory chain. The immediate electron acceptor for the enzyme in this species is believed to be ubiquinone. Couples the redox reaction to proton translocation (for every two electrons transferred, four hydrogen ions are translocated across the cytoplasmic membrane), and thus conserves the redox energy in a proton gradient. This chain is NADH-quinone oxidoreductase subunit A, found in Ralstonia nicotianae (strain ATCC BAA-1114 / GMI1000) (Ralstonia solanacearum).